Here is a 970-residue protein sequence, read N- to C-terminus: Testis anion transporter 1 (970 aa).

Residues 1–95 are Cytoplasmic-facing; the sequence is MAQLERSAIS…YRLKDWLLGD (95 aa). The chain crosses the membrane as a helical span at residues 96 to 116; that stretch reads LLAGISVGLVQVPQGLTLSLL. Residues 117–119 lie on the Extracellular side of the membrane; that stretch reads ARQ. A helical transmembrane segment spans residues 120-140; it reads LIPPLNIAYAAFCSSVIYVIF. At 141 to 146 the chain is on the cytoplasmic side; that stretch reads GSCHQM. A helical membrane pass occupies residues 147 to 167; that stretch reads SIGSFFLVSALLINVLKVSPF. Residues 168 to 202 are Extracellular-facing; sequence NNGQLVMGSFVKNEFSAPSYLMGYNKSLSVVATTT. N-linked (GlcNAc...) asparagine glycosylation occurs at Asn192. Residues 203–223 traverse the membrane as a helical segment; sequence FLTGIIQLIMGVLGLGFIATY. At 224–232 the chain is on the cytoplasmic side; that stretch reads LPESAMSAY. Residues 233 to 253 form a helical membrane-spanning segment; sequence LAAVALHIMLSQLTFIFGIMI. Residues 254-270 are Extracellular-facing; it reads SFHAGPISFFYDIINYC. Residues 271 to 291 form a helical membrane-spanning segment; that stretch reads VALPKANSTSILVFLTVVVAL. Residues 292-307 are Cytoplasmic-facing; sequence RINKCIRISFNQYPIE. Residues 308-328 traverse the membrane as a helical segment; sequence FPMELFLIIGFTVIANKISMA. Residues 329–355 are Extracellular-facing; sequence TETSQTLIDMIPYSFLLPVTPDFSLLP. Residues 356–376 form a helical membrane-spanning segment; it reads KIILQAFSLSLVSSFLLIFLG. The Cytoplasmic portion of the chain corresponds to 377–392; it reads KKIASLHNYSVNSNQD. Residues 393 to 413 form a helical membrane-spanning segment; it reads LIAIGLCNVVSSFFRSCVFTG. Residues 414–429 lie on the Extracellular side of the membrane; sequence AIARTIIQDKSGGRQQ. The chain crosses the membrane as a helical span at residues 430 to 450; sequence FASLVGAGVMLLLMVKMGHFF. Residues 451 to 452 lie on the Cytoplasmic side of the membrane; sequence YT. Residues 453–473 traverse the membrane as a helical segment; the sequence is LPNAVLAGIILSNVIPYLETI. The Extracellular segment spans residues 474 to 497; sequence SNLPSLWRQDQYDCALWMMTFSSS. Residues 498-518 form a helical membrane-spanning segment; that stretch reads IFLGLDIGLIISVVSAFFITT. The Cytoplasmic portion of the chain corresponds to 519-970; that stretch reads VRSHRAKILL…SPEGNSNEDV (452 aa). In terms of domain architecture, STAS spans 543 to 795; that stretch reads DYREIITIPG…LSVHDAVLFA (253 aa). Positions 664-970 are interaction with RACGAP1; it reads TVSSVSQKNQ…SPEGNSNEDV (307 aa). Over residues 858–868 the composition is skewed to acidic residues; that stretch reads SELDLELESEQ. Residues 858–970 form a disordered region; sequence SELDLELESE…SPEGNSNEDV (113 aa). Basic and acidic residues predominate over residues 877–898; sequence DLDRELEPEMEPKAETETKTQT. Over residues 938–948 the composition is skewed to low complexity; the sequence is STQSQTQTRTW.

It belongs to the SLC26A/SulP transporter (TC 2.A.53) family. Interacts with RACGAP1. Interacts with CFTR; stimulates anion transport activity of CFTR. N-glycosylated. As to expression, expression observed exclusively in testis, restricted to the meiotic phase of the germ cell. Abundant expression located in the seminiferous tubules, concentrated on the luminal side of the tubuli harboring the spermatocytes and spermatids.

It is found in the membrane. The enzyme catalyses sulfate(out) + chloride(in) = sulfate(in) + chloride(out). It catalyses the reaction oxalate(in) + chloride(out) = oxalate(out) + chloride(in). Its activity is regulated as follows. Activity is inhibited by 4,4'-Di-isothiocyanatostilbene-2,2'-disulfonic acid (DIDS - an inhibitor of several anion channels and transporters) and gluconate. Functionally, antiporter that mediates the exchange of sulfate and oxalate against chloride ions across a membrane. Stimulates anion transport activity of CFTR. May cooperate with CFTR in the regulation of chloride and bicarbonate ions fluxes required for activation of the ADCY10/PKA pathway during sperm motility and sperm capacitation. May play a role in sperm tail differentiation and motility and hence male fertility. The protein is Testis anion transporter 1 of Homo sapiens (Human).